A 900-amino-acid chain; its full sequence is Zinc finger protein 574 (900 aa).

3 consecutive C2H2-type zinc fingers follow at residues 16–38, 76–98, and 126–148; these read YVCS…QNSH, YQCL…QELH, and YECV…RQTH. A Phosphoserine modification is found at serine 164. Residues 213-235 form a C2H2-type 4 zinc finger; the sequence is YKCSECSQLFQMPADFLEHQATH. The segment covering 244-254 has biased composition (low complexity); the sequence is AEPATQQETQV. A disordered region spans residues 244–306; that stretch reads AEPATQQETQ…RRNNSGESGG (63 aa). A compositionally biased stretch (basic and acidic residues) spans 273–290; that stretch reads HSYELRNELRNGEAIGRD. Position 301 is a phosphoserine (serine 301). C2H2-type zinc fingers lie at residues 312 to 334, 339 to 361, 367 to 389, 395 to 416, 469 to 492, 498 to 520, 526 to 548, 554 to 576, 582 to 604, and 610 to 633; these read LFCS…LRSH, FKCP…LGDH, FLCV…RRAH, HSCP…RRTH, YRCL…RFVH, HKCS…LRTH, FPCP…RLTH, YRCG…RLVH, YRCQ…RYHH, and YKCR…LVIH. Residues 639 to 662 form a C2H2-type 15; degenerate zinc finger; it reads YRCSSCGAAFPSSLRLREHRCAAA. A C2H2-type 16 zinc finger spans residues 670–692; that stretch reads FECGTCGKKVGSAARLQAHEAAH. A disordered region spans residues 690–741; it reads AAHAAAGPGEVLAKEPPAPRASRATRTPVAPSPTALSGTTSAAPAAPARRRG. Residue serine 721 is modified to Phosphoserine. The segment covering 721–736 has biased composition (low complexity); sequence SPTALSGTTSAAPAAP. Threonine 728 carries the phosphothreonine modification. C2H2-type zinc fingers lie at residues 742–764, 770–792, 798–820, and 826–848; these read PECS…RRIH, YPCP…RRLH, FACE…RRIH, and YSCP…RKTH. Arginine 836 is subject to Asymmetric dimethylarginine.

It belongs to the krueppel C2H2-type zinc-finger protein family.

It localises to the nucleus. May be involved in transcriptional regulation. The sequence is that of Zinc finger protein 574 (Znf574) from Mus musculus (Mouse).